The following is a 336-amino-acid chain: E3 ubiquitin-protein ligase RING2 (336 aa).

The interval 2-179 is interaction with HIP2; the sequence is TQTVQTNGVQ…AEDNGDSSHC (178 aa). The RING-type zinc finger occupies 51-91; it reads CPICLDMLKNTMTTKECLHRFCADCIITALRSGNKECPTCR. The tract at residues 93–98 is interaction with nucleosomes via an acidic patch on histone H2A and histone H2B; it reads KLVSKR. The disordered stretch occupies residues 158–218; the sequence is RGKKHQIENG…NATENGGGDI (61 aa). The span at 176 to 190 shows a compositional bias: polar residues; that stretch reads SSHCSNASVHSNQEA.

Component of chromatin-associated Polycomb (PcG) complexes. Component of a PRC1-like complex. Component of some MLL1/MLL complex.

The protein localises to the nucleus. The protein resides in the cytoplasm. It localises to the chromosome. It carries out the reaction S-ubiquitinyl-[E2 ubiquitin-conjugating enzyme]-L-cysteine + [acceptor protein]-L-lysine = [E2 ubiquitin-conjugating enzyme]-L-cysteine + N(6)-ubiquitinyl-[acceptor protein]-L-lysine.. The protein operates within protein modification; protein ubiquitination. Its function is as follows. E3 ubiquitin-protein ligase that mediates monoubiquitination of 'Lys-119' of histone H2A (H2AK119Ub), thereby playing a central role in histone code and gene regulation. H2AK119Ub gives a specific tag for epigenetic transcriptional repression. Essential component of a Polycomb group (PcG) multiprotein PRC1-like complex, a complex class required to maintain the transcriptionally repressive state of many genes, including Hox genes, throughout development. PcG PRC1 complex acts via chromatin remodeling and modification of histones, rendering chromatin heritably changed in its expressibility. The sequence is that of E3 ubiquitin-protein ligase RING2 (rnf2) from Danio rerio (Zebrafish).